A 190-amino-acid polypeptide reads, in one-letter code: Probable gluconokinase (190 aa).

7 to 14 (GVSGSGKT) lines the ATP pocket.

It belongs to the gluconokinase GntK/GntV family.

It catalyses the reaction D-gluconate + ATP = 6-phospho-D-gluconate + ADP + H(+). The protein operates within carbohydrate acid metabolism; D-gluconate degradation. This is Probable gluconokinase (idnk) from Xenopus tropicalis (Western clawed frog).